Consider the following 141-residue polypeptide: ATP synthase F(0) complex subunit C2, mitochondrial (141 aa).

A mitochondrion-targeting transit peptide spans 1 to 66 (MFSCFKFIST…RNFQTSAISR (66 aa)). The helical transmembrane segment at 82 to 102 (VGVAGSGAGIGTVFGSLIIGY) threads the bilayer. N6,N6,N6-trimethyllysine is present on Lys-109. Residues 117–137 (ILGFALSEAMGLFCLMVAFLI) traverse the membrane as a helical segment.

It belongs to the ATPase C chain family. F-type ATPases have 2 components, CF(1) - the catalytic core - and CF(0) - the membrane proton channel. CF(1) has five subunits: alpha(3), beta(3), gamma(1), delta(1), epsilon(1). CF(0) has three main subunits: a, b and c. Interacts with DNAJC30; interaction is direct. Trimethylated by ATPSCKMT at Lys-109. Methylation is required for proper incorporation of the C subunit into the ATP synthase complex and mitochondrial respiration.

It is found in the mitochondrion membrane. In terms of biological role, mitochondrial membrane ATP synthase (F(1)F(0) ATP synthase or Complex V) produces ATP from ADP in the presence of a proton gradient across the membrane which is generated by electron transport complexes of the respiratory chain. F-type ATPases consist of two structural domains, F(1) - containing the extramembraneous catalytic core and F(0) - containing the membrane proton channel, linked together by a central stalk and a peripheral stalk. During catalysis, ATP synthesis in the catalytic domain of F(1) is coupled via a rotary mechanism of the central stalk subunits to proton translocation. Part of the complex F(0) domain. A homomeric c-ring of probably 10 subunits is part of the complex rotary element. The protein is ATP synthase F(0) complex subunit C2, mitochondrial of Pongo abelii (Sumatran orangutan).